Here is a 100-residue protein sequence, read N- to C-terminus: Small ribosomal subunit protein uS14c (100 aa).

This sequence belongs to the universal ribosomal protein uS14 family. In terms of assembly, part of the 30S ribosomal subunit.

Its subcellular location is the plastid. The protein localises to the chloroplast. Functionally, binds 16S rRNA, required for the assembly of 30S particles. This chain is Small ribosomal subunit protein uS14c, found in Coffea arabica (Arabian coffee).